A 538-amino-acid chain; its full sequence is MAGPPALPPPETAAAATTAAAASSSAASPHYQEWILDTIDSLRSRKARPDLERICRMVRRRHGPEPERTRAELEKLIQQRAVLRVSYKGSISYRNAARVQPPRRGATPPAPPRAPRGAPAAAAAAAPPPTPAPPPPPAPVAAAAPARAPRAAAAAATAPPSPGPAQPGPRAQRAAPLAAPPPAPAAPPAVAPPAGPRRAPPPAVAAREPPLPPPPQPPAPPQQQQPPPPQPQPPPEGGAVRAGGAARPVSLREVVRYLGGSGGAGGRLTRGRVQGLLEEEAAARGRLERTRLGALALPRGDRPGRAPPAASARPSRSKRGGEERVLEKEEEEDDDEDEDEEDDVSEGSEVPESDRPAGAQHHQLNGERGPQSAKERVKEWTPCGPHQGQDEGRGPAPGSGTRQVFSMAAMNKEGGTASVATGPDSPSPVPLPPGKPALPGADGTPFGCPPGRKEKPSDPVEWTVMDVVEYFTEAGFPEQATAFQEQEIDGKSLLLMQRTDVLTGLSIRLGPALKIYEHHIKVLQQGHFEDDDPDGFLG.

Residues 1-11 are compositionally biased toward pro residues; the sequence is MAGPPALPPPE. Disordered regions lie at residues 1-30 and 92-247; these read MAGP…ASPH and SYRN…GAAR. Residues 12–29 show a composition bias toward low complexity; the sequence is TAAAATTAAAASSSAASP. One can recognise an SAMD1-like winged helix (WH) domain in the interval 23-99; it reads SSSAASPHYQ…SISYRNAARV (77 aa). Thr107 carries the phosphothreonine modification. Residues 115–125 are compositionally biased toward low complexity; it reads PRGAPAAAAAA. Residues 126 to 139 are compositionally biased toward pro residues; it reads APPPTPAPPPPPAP. The segment covering 140–158 has biased composition (low complexity); it reads VAAAAPARAPRAAAAAATA. Residue Ser161 is modified to Phosphoserine. A compositionally biased stretch (low complexity) spans 168 to 177; the sequence is GPRAQRAAPL. A compositionally biased stretch (pro residues) spans 178–236; sequence AAPPPAPAAPPAVAPPAGPRRAPPPAVAAREPPLPPPPQPPAPPQQQQPPPPQPQPPPE. The segment covering 237 to 247 has biased composition (low complexity); that stretch reads GGAVRAGGAAR. Residue Ser261 is modified to Phosphoserine. The segment covering 282 to 291 has biased composition (basic and acidic residues); it reads AARGRLERTR. The disordered stretch occupies residues 282–458; the sequence is AARGRLERTR…PPGRKEKPSD (177 aa). The segment covering 328–351 has biased composition (acidic residues); it reads KEEEEDDDEDEDEEDDVSEGSEVP. The segment covering 425–436 has biased composition (pro residues); the sequence is SPSPVPLPPGKP. Positions 462–530 constitute an SAM domain; that stretch reads WTVMDVVEYF…KVLQQGHFED (69 aa).

As to quaternary structure, homopolymerize into a closed pentameric ring. Interacts (via SAM domain) with L3MBTL3 (via SAM domain); the interaction mediates L3MBTL3 binding to chromatin. Interacts (via WH domain) with KDM1A; the interaction modulates KDM1A function. Expressed in atherosclerotic lesions, not in normal intima. Expressed in foam cells.

The protein localises to the nucleus. It is found in the chromosome. Its subcellular location is the secreted. Its function is as follows. Unmethylated CpG islands (CGIs)-binding protein which localizes to H3K4me3-decorated CGIs, where it acts as a transcriptional repressor. Tethers L3MBTL3 to chromatin and interacts with the KDM1A histone demethylase complex to modulate H3K4me2 and H3K4me3 levels at CGIs. Plays a role in atherogenesis by binding with LDL on cell surface and promoting LDL oxidation which leads to the formation of foam cell. This chain is Sterile alpha motif domain-containing protein 1, found in Homo sapiens (Human).